The chain runs to 685 residues: Kinesin-like protein KIP2 (685 aa).

Disordered stretches follow at residues Glu11 to Gln46 and Ser63 to Ser101. Positions Gly86–Ser101 are enriched in low complexity. The 334-residue stretch at Asn113–Ile446 folds into the Kinesin motor domain. Gly185–Thr192 is an ATP binding site. Coiled-coil stretches lie at residues Ile464–Ala486 and Leu520–Ser663. A disordered region spans residues Ser485–Glu510.

This sequence belongs to the TRAFAC class myosin-kinesin ATPase superfamily. Kinesin family.

Its subcellular location is the cytoplasm. It is found in the cytoskeleton. In terms of biological role, required for assembly of the mitotic spindle. This chain is Kinesin-like protein KIP2 (KIP2), found in Eremothecium gossypii (strain ATCC 10895 / CBS 109.51 / FGSC 9923 / NRRL Y-1056) (Yeast).